Here is a 251-residue protein sequence, read N- to C-terminus: Hydroxyacylglutathione hydrolase (251 aa).

Zn(2+) is bound by residues His53, His55, Asp57, His58, His110, Asp127, and His165.

It belongs to the metallo-beta-lactamase superfamily. Glyoxalase II family. In terms of assembly, monomer. The cofactor is Zn(2+).

The enzyme catalyses an S-(2-hydroxyacyl)glutathione + H2O = a 2-hydroxy carboxylate + glutathione + H(+). The protein operates within secondary metabolite metabolism; methylglyoxal degradation; (R)-lactate from methylglyoxal: step 2/2. Its function is as follows. Thiolesterase that catalyzes the hydrolysis of S-D-lactoyl-glutathione to form glutathione and D-lactic acid. The protein is Hydroxyacylglutathione hydrolase of Shigella dysenteriae serotype 1 (strain Sd197).